A 426-amino-acid polypeptide reads, in one-letter code: Inhibin beta A chain (426 aa).

An N-terminal signal peptide occupies residues 1–20; it reads MPLLWLRGFLLASCWIIVRS. A propeptide spanning residues 21 to 310 is cleaved from the precursor; the sequence is SPTPGSEGHS…EDHPHRRRRR (290 aa). An N-linked (GlcNAc...) asparagine glycan is attached at asparagine 165. Residues 259–288 form a disordered region; that stretch reads KKKKKEEEGEGKKKGGGEGGAGADEEKEQS. Residues 263–274 are compositionally biased toward basic and acidic residues; that stretch reads KEEEGEGKKKGG. 4 cysteine pairs are disulfide-bonded: cysteine 314/cysteine 322, cysteine 321/cysteine 391, cysteine 350/cysteine 423, and cysteine 354/cysteine 425.

It belongs to the TGF-beta family. In terms of assembly, dimeric, linked by one or more disulfide bonds. Inhibin A is a dimer of alpha/INHA and beta-A/INHBA. Activin A is a homodimer of beta-A/INHBA. Activin AB is a dimer of beta-A/INHBA and beta-B/INHBB. Interacts with FST and FSTL3; these interactions prevent activin A interaction to its type II receptor. Activin A interacts with ACVR2A. Activin A interacts with BMPR2. Inhibin A interacts with ACVR1; this interaction creates a non-signaling complex (NSC) that inhibits ACVR1-mediated BMP signaling. Inhibin A interacts with ACVR2A.

The protein localises to the secreted. Its function is as follows. Inhibins/activins are involved in regulating a number of diverse functions such as hypothalamic and pituitary hormone secretion, gonadal hormone secretion, germ cell development and maturation, erythroid differentiation, insulin secretion, nerve cell survival, embryonic axial development or bone growth, depending on their subunit composition. In terms of biological role, activin A is a homodimer of INHBA that plays a role in several essential biological processes including embryonic development, stem cell maintenance and differentiation, haematopoiesis, cell proliferation and tissue fibrosis. Signals through type I (such as ACVR1B or ACVR1C) and type II receptors (such as ACVR2A, ACVR2B or BMPR2) which, upon ligand binding, phosphorylate SMAD2 and SMAD3 intracellular signaling mediators that form a complex with SMAD4, translocate to the nucleus and modulate gene expression. Can also activate alternative non-canonical intracellular signaling pathways including the p38 MAPK, extracellular signal-regulated kinases 1/2 (ERK1/2) and c-Jun N-terminal kinases (JNKs) to modulate cell migration and differentiation. Alternatively, promotes osteoblastic differentiation via ACVRL1-SMAD1/5/9 pathway. In addition, can engage the type I receptor ACVR1 to form an ACVR1-activin A-type II receptor non-signaling complex (NSC) that renders receptors unavailable for engagement with BMPs, hence resulting in an apparent inhibition of ACVR1-mediated BMP signaling. Functionally, inhibin A is a dimer of alpha/INHA and beta-A/INHBA that functions as a feedback regulator in the hypothalamic-pituitary-gonadal (HPG) axis. Inhibits the secretion of FSH from the anterior pituitary gland by acting on pituitary gonadotrope cells. Antagonizes activin A by binding to the proteoglycan, betaglycan, and forming a stable complex with and, thereby, sequestering type II activin receptors while excluding type I receptor. The polypeptide is Inhibin beta A chain (INHBA) (Homo sapiens (Human)).